Here is a 176-residue protein sequence, read N- to C-terminus: Large ribosomal subunit protein eL20 (176 aa).

Residue Lys-11 forms a Glycyl lysine isopeptide (Lys-Gly) (interchain with G-Cter in SUMO2) linkage. Residue Tyr-63 is modified to Phosphotyrosine. Ser-71 bears the Phosphoserine mark. N6-succinyllysine is present on Lys-76. The residue at position 123 (Ser-123) is a Phosphoserine. Glycyl lysine isopeptide (Lys-Gly) (interchain with G-Cter in SUMO2) cross-links involve residues Lys-128 and Lys-170.

Belongs to the eukaryotic ribosomal protein eL20 family. Component of the large ribosomal subunit. Binds IPO9 with high affinity.

Its subcellular location is the cytoplasm. Its function is as follows. Component of the large ribosomal subunit. The ribosome is a large ribonucleoprotein complex responsible for the synthesis of proteins in the cell. This chain is Large ribosomal subunit protein eL20 (RPL18A), found in Bos taurus (Bovine).